Here is a 339-residue protein sequence, read N- to C-terminus: Probable cytosolic iron-sulfur protein assembly protein CIAO1 (339 aa).

WD repeat units follow at residues 14-53, 59-98, 103-142, 148-187, 192-231, 250-289, and 301-339; these read HPDS…WICK, GHQR…FECV, GHEN…EYEC, SHTQ…WVCC, GHES…NEQG, FHTR…DPQQ, and AHSQ…PAGL. The short motif at 176 to 178 is the LYR motif; required for interaction with HSC20 element; sequence LYQ.

The protein belongs to the WD repeat CIA1 family. As to quaternary structure, component of the CIA complex. Interacts with CIAO2A and forms a complex with CIAO2B and MMS19; the interactions with CIAO2A and CIAO2B are mutually exclusive. Interacts with CHD1L, ERCC2, IREB2 and POLD1. Component of the MMXD complex, which includes CIAO1, ERCC2, CIAO2B, MMS19 and SLC25A5. Interacts with WT1. Interacts with CIAO3. Interacts (via LYR motif) with HSC20.

Its subcellular location is the cytoplasm. Functionally, key component of the cytosolic iron-sulfur protein assembly (CIA) complex, a multiprotein complex that mediates the incorporation of iron-sulfur cluster into extramitochondrial Fe/S proteins. As a CIA complex component, interacts specifically with CIAO2A or CIAO2B and MMS19 to assist different branches of iron-sulfur protein assembly, depending of its interactors. The complex CIAO1:CIAO2B:MMS19 binds to and facilitates the assembly of most cytosolic-nuclear Fe/S proteins. CIAO1:CIAO2A specifically matures ACO1 and stabilizes IREB2. Seems to specifically modulate the transactivation activity of WT1. As part of the mitotic spindle-associated MMXD complex it may play a role in chromosome segregation. The protein is Probable cytosolic iron-sulfur protein assembly protein CIAO1 of Mus musculus (Mouse).